Here is a 168-residue protein sequence, read N- to C-terminus: MVLLETNRLRLQTIDIPLLDAASKQDHQAIKELGYETNGEWPNSDFFEAIPYFREILVKNNGTKGFDSWIIVKKDNYEIVGGTGFLGDPDENGMIEIGFATNKSHRRKGYCVEAAQKLINWALSRETVSRITARCEHDNLGSQKTLEKLGFILNHKSAEYKHWIYVTK.

Positions 14 to 168 constitute an N-acetyltransferase domain; it reads IDIPLLDAAS…EYKHWIYVTK (155 aa).

It belongs to the acetyltransferase family.

This is an uncharacterized protein from Bacillus subtilis (strain 168).